The following is a 336-amino-acid chain: Secreted effector protein SifA (336 aa).

The interval 1–330 is interaction with host PLEKHM2; sequence MPITIGNGFL…LHVRSEQQSG (330 aa).

This sequence belongs to the Sif family. As to quaternary structure, interacts with host PLEKHM2. Interacts with SseJ; the interaction is indirect.

It localises to the secreted. It is found in the host cytoplasm. Its subcellular location is the host cell membrane. Effector proteins function to alter host cell physiology and promote bacterial survival in host tissues. This protein is required for endosomal tubulation and formation of Salmonella-induced filaments (Sifs), which are filamentous structures containing lysosomal membrane glycoproteins within epithelial cells. Sif formation is concomitant with intracellular bacterial replication. This is Secreted effector protein SifA (sifA) from Salmonella typhimurium (strain LT2 / SGSC1412 / ATCC 700720).